The chain runs to 104 residues: UPF0212 protein PH1312 (104 aa).

This sequence belongs to the UPF0212 family.

This Pyrococcus horikoshii (strain ATCC 700860 / DSM 12428 / JCM 9974 / NBRC 100139 / OT-3) protein is UPF0212 protein PH1312.